Reading from the N-terminus, the 119-residue chain is Ribonuclease P protein component (119 aa).

It belongs to the RnpA family. In terms of assembly, consists of a catalytic RNA component (M1 or rnpB) and a protein subunit.

The enzyme catalyses Endonucleolytic cleavage of RNA, removing 5'-extranucleotides from tRNA precursor.. RNaseP catalyzes the removal of the 5'-leader sequence from pre-tRNA to produce the mature 5'-terminus. It can also cleave other RNA substrates such as 4.5S RNA. The protein component plays an auxiliary but essential role in vivo by binding to the 5'-leader sequence and broadening the substrate specificity of the ribozyme. The sequence is that of Ribonuclease P protein component from Aeromonas hydrophila subsp. hydrophila (strain ATCC 7966 / DSM 30187 / BCRC 13018 / CCUG 14551 / JCM 1027 / KCTC 2358 / NCIMB 9240 / NCTC 8049).